We begin with the raw amino-acid sequence, 314 residues long: MTDMLTTPRPEAQGQFLVAALYHFVAFPRFAEFRGPLQAVCDANGVKGTLLLAHEGINGTIAGTEAGIATVLAYLTAQPEFTGLEHKESRAAAMPFLRMKVRLKKEIVTMGVETIDPNQVVGTYVEPKDWNALIADPETLVIDTRNDYETAIGLFRGAVDPQTKTFREFPDWVRNHTGLHNKPKIAMYCTGGIRCEKATAFMKEQGFEEVYHLKGGILKYLEQIPAEESLWDGACFVFDERVSVTHGLAEGEHTLCHACRQPLTPEDVLSPHHEEGVSCVHCHAVRTEEDRERYRERQRQIALAKKRGERHLGS.

The 95-residue stretch at 135–229 (ADPETLVIDT…YLEQIPAEES (95 aa)) folds into the Rhodanese domain. Cysteine 189 acts as the Cysteine persulfide intermediate in catalysis.

It belongs to the TrhO family.

The enzyme catalyses uridine(34) in tRNA + AH2 + O2 = 5-hydroxyuridine(34) in tRNA + A + H2O. In terms of biological role, catalyzes oxygen-dependent 5-hydroxyuridine (ho5U) modification at position 34 in tRNAs. This Sinorhizobium fredii (strain NBRC 101917 / NGR234) protein is tRNA uridine(34) hydroxylase.